A 181-amino-acid chain; its full sequence is Major urinary protein 11 (181 aa).

The signal sequence occupies residues 1-19 (MKMLLLLLCLGLTLVCVHA). A disulfide bridge connects residues C83 and C176.

This sequence belongs to the calycin superfamily. Lipocalin family.

The protein resides in the secreted. Major urinary proteins (Mups) bind pheromones, and thus stabilize them to allow slow release into the air from urine marks. May protect pheromones from oxidation. May also act as pheromones themselves. In this context, they play a role in the regulation of social behaviors, such as aggression, mating, pup-suckling, territory establishment and dominance. Binds the pheromone analog 2-sec-butyl-4,5-dihydrothiazole (SBT) in vitro. In Mus musculus (Mouse), this protein is Major urinary protein 11.